Consider the following 568-residue polypeptide: Protein OCTOPUS-like (568 aa).

Disordered stretches follow at residues Met-1 to Thr-27, Leu-78 to Phe-99, Glu-168 to Pro-203, Gln-242 to Ser-276, Pro-360 to Ser-428, Asp-446 to Gly-512, and Arg-526 to His-558. Positions Ser-82 to Gly-93 are enriched in low complexity. A compositionally biased stretch (acidic residues) spans Glu-168–Gly-179. Positions Glu-180 to Glu-193 are enriched in basic and acidic residues. Ser-260 bears the Phosphoserine mark. Polar residues predominate over residues Ser-400–Asn-423. Over residues Gly-532 to Trp-546 the composition is skewed to gly residues.

Belongs to the OCTOPUS family. Phosphorylation at Ser-260 amplifies the promotion of protophloem differentiation.

It localises to the cell membrane. Its subcellular location is the cytoplasm. In terms of biological role, potentiates primary root protophloem differentiation. Regulates roots architecture. The polypeptide is Protein OCTOPUS-like (Arabidopsis thaliana (Mouse-ear cress)).